The chain runs to 167 residues: Small ribosomal subunit protein uS5 (167 aa).

In terms of domain architecture, S5 DRBM spans 11 to 74 (LQEKLIAVNR…EKARRNMINV (64 aa)).

It belongs to the universal ribosomal protein uS5 family. In terms of assembly, part of the 30S ribosomal subunit. Contacts proteins S4 and S8.

With S4 and S12 plays an important role in translational accuracy. In terms of biological role, located at the back of the 30S subunit body where it stabilizes the conformation of the head with respect to the body. The chain is Small ribosomal subunit protein uS5 from Escherichia coli O139:H28 (strain E24377A / ETEC).